The primary structure comprises 132 residues: Small ribosomal subunit protein uS11 (132 aa).

Belongs to the universal ribosomal protein uS11 family. As to quaternary structure, part of the 30S ribosomal subunit. Interacts with proteins S7 and S18. Binds to IF-3.

Functionally, located on the platform of the 30S subunit, it bridges several disparate RNA helices of the 16S rRNA. Forms part of the Shine-Dalgarno cleft in the 70S ribosome. This Chlamydia trachomatis serovar L2 (strain ATCC VR-902B / DSM 19102 / 434/Bu) protein is Small ribosomal subunit protein uS11.